The primary structure comprises 598 residues: Proline--tRNA ligase (598 aa).

Belongs to the class-II aminoacyl-tRNA synthetase family. ProS type 1 subfamily. Homodimer.

It is found in the cytoplasm. The catalysed reaction is tRNA(Pro) + L-proline + ATP = L-prolyl-tRNA(Pro) + AMP + diphosphate. In terms of biological role, catalyzes the attachment of proline to tRNA(Pro) in a two-step reaction: proline is first activated by ATP to form Pro-AMP and then transferred to the acceptor end of tRNA(Pro). As ProRS can inadvertently accommodate and process non-cognate amino acids such as alanine and cysteine, to avoid such errors it has two additional distinct editing activities against alanine. One activity is designated as 'pretransfer' editing and involves the tRNA(Pro)-independent hydrolysis of activated Ala-AMP. The other activity is designated 'posttransfer' editing and involves deacylation of mischarged Ala-tRNA(Pro). The misacylated Cys-tRNA(Pro) is not edited by ProRS. This is Proline--tRNA ligase from Rippkaea orientalis (strain PCC 8801 / RF-1) (Cyanothece sp. (strain PCC 8801)).